We begin with the raw amino-acid sequence, 290 residues long: Bifunctional protein FolD (290 aa).

Residues 169–171 (GAS), I194, and I235 each bind NADP(+).

Belongs to the tetrahydrofolate dehydrogenase/cyclohydrolase family. Homodimer.

It carries out the reaction (6R)-5,10-methylene-5,6,7,8-tetrahydrofolate + NADP(+) = (6R)-5,10-methenyltetrahydrofolate + NADPH. It catalyses the reaction (6R)-5,10-methenyltetrahydrofolate + H2O = (6R)-10-formyltetrahydrofolate + H(+). It participates in one-carbon metabolism; tetrahydrofolate interconversion. Catalyzes the oxidation of 5,10-methylenetetrahydrofolate to 5,10-methenyltetrahydrofolate and then the hydrolysis of 5,10-methenyltetrahydrofolate to 10-formyltetrahydrofolate. In Helicobacter pylori (strain J99 / ATCC 700824) (Campylobacter pylori J99), this protein is Bifunctional protein FolD.